We begin with the raw amino-acid sequence, 238 residues long: 15,16-dihydrobiliverdin:ferredoxin oxidoreductase (238 aa).

The protein belongs to the HY2 family.

It catalyses the reaction 15,16-dihydrobiliverdin + oxidized 2[4Fe-4S]-[ferredoxin] = biliverdin IXalpha + reduced 2[4Fe-4S]-[ferredoxin] + 2 H(+). In terms of biological role, catalyzes the two-electron reduction of biliverdin IX-alpha at the C15 methine bridge. The sequence is that of 15,16-dihydrobiliverdin:ferredoxin oxidoreductase from Prochlorococcus marinus (strain NATL1A).